The primary structure comprises 441 residues: MNILFSRFSFLLLFLCSWTSFTFTTTEAYDALDPYGNITIKWDIMSWTGDGYVAVVTIFNFQQYRHIEAPGWQLGWSWMKKEVIWSMVGGQATEQGDCSKFKGNIPHCCKKTPAIVDLLPGTPYNQQISNCCRGGVISAWAQDPATAISSFQISVGQSGTTNTTVRAPRNITLKAPGPGYTCGPAKLVKPSRFISADKRRKTQSLLTWNITCTYSQFLARKTPTCCVSLSAFYNETIVPCPTCSCGCQNSSQAGTCVDPKIASVVPALGKNNLEPLLQCTQHMCPIRVHWHVKTSYKEYWRVKVAITNFNYNMNYSQWNLVVQHPNFDNLTKLFSFNYKPLNPYLNINDTAMLWGIKFYNDFLSQAGPVGNVQSELLFQKNPLEFTFEKGWAFPRRIYFNGDNCVMPPPDSYPWLPNASPNIATSPFVILLITFLSVLILM.

Positions 1–28 (MNILFSRFSFLLLFLCSWTSFTFTTTEA) are cleaved as a signal peptide. Residues N37, N162, N170, N209, N234, N249, N314, N329, and N348 are each glycosylated (N-linked (GlcNAc...) asparagine). N417 carries GPI-anchor amidated asparagine lipidation. The propeptide at 418–441 (ASPNIATSPFVILLITFLSVLILM) is removed in mature form.

This sequence belongs to the COBRA family. Expressed in roots, stems, leaves, flowers and siliques.

Its subcellular location is the cell membrane. This is COBRA-like protein 2 (COBL2) from Arabidopsis thaliana (Mouse-ear cress).